The sequence spans 1027 residues: Scavenger receptor cysteine-rich domain-containing protein SCART1 (1027 aa).

Residues 1-19 form the signal peptide; the sequence is MRAALWTLGLGPLLLNLWA. Residues 20 to 906 lie on the Extracellular side of the membrane; sequence VPIGGPGALR…APFRTFWVVS (887 aa). The SRCR 1 domain maps to 28–128; that stretch reads LRLAYRHSTC…HAWVVVALCS (101 aa). 3 disulfides stabilise this stretch: C53/C117, C66/C127, and C97/C107. N94 carries an N-linked (GlcNAc...) asparagine glycan. An N-linked (GlcNAc...) asparagine glycan is attached at N129. 7 consecutive SRCR domains span residues 135–227, 232–326, 328–428, 434–534, 555–656, 661–761, and 786–886; these read LRLV…VVCS, ARLV…LRCS, FRMV…AVCS, LRLR…VVCS, LSLH…VFCS, LRLR…AGLS, and LRVR…VRCW. Disulfide bonds link C160–C216, C171–C226, C196–C206, C253–C315, C266–C325, and C297–C307. An N-linked (GlcNAc...) asparagine glycan is attached at N332. 7 disulfide bridges follow: C353–C417, C366–C427, C397–C407, C472–C533, C503–C513, C594–C655, and C625–C635. 2 disulfides stabilise this stretch: C824–C885 and C855–C865. A helical membrane pass occupies residues 907 to 927; sequence VVLGSLLGLLLLGLMAFLILP. Over 928–1027 the chain is Cytoplasmic; the sequence is RVTQAMQRGL…AAFPLEEMTL (100 aa).

As to expression, mainly expressed by CD4(+) and CD8(+) T lymphocytes. Also highly expressed in small intestine and colon. Expressed (at protein level) in small intestine, stomach, gall bladder, and placental villi.

Its subcellular location is the membrane. Functionally, may play a role in the immune system, perhaps as a co-receptor on alphabeta and gammadelta T-cells. In Homo sapiens (Human), this protein is Scavenger receptor cysteine-rich domain-containing protein SCART1.